The following is a 281-amino-acid chain: Fructose-bisphosphate aldolase class 1 (281 aa).

Lys-191 (schiff-base intermediate with dihydroxyacetone-P) is an active-site residue.

Belongs to the DeoC/FbaB aldolase family. Homooctamer.

It localises to the cytoplasm. The enzyme catalyses beta-D-fructose 1,6-bisphosphate = D-glyceraldehyde 3-phosphate + dihydroxyacetone phosphate. With respect to regulation, activated by citrate. In Pyrococcus furiosus (strain ATCC 43587 / DSM 3638 / JCM 8422 / Vc1), this protein is Fructose-bisphosphate aldolase class 1 (fba).